We begin with the raw amino-acid sequence, 153 residues long: Transcriptional repressor NrdR (153 aa).

Residues 3–34 (CPFCGHLEDRVIDSRAGGAGEVIRRRRECASC) fold into a zinc finger. The region spanning 49–139 (PTVVKKDGRR…VYRSFRDIDQ (91 aa)) is the ATP-cone domain.

This sequence belongs to the NrdR family. Zn(2+) serves as cofactor.

Functionally, negatively regulates transcription of bacterial ribonucleotide reductase nrd genes and operons by binding to NrdR-boxes. The chain is Transcriptional repressor NrdR from Sorangium cellulosum (strain So ce56) (Polyangium cellulosum (strain So ce56)).